Reading from the N-terminus, the 343-residue chain is Mas-related G-protein coupled receptor member F (343 aa).

Residues 1–44 (MAGNCSWEAHSTNQNKMCPGMSEARELYSRGFLTIEQIATLPPP) are Extracellular-facing. N-linked (GlcNAc...) asparagine glycosylation occurs at Asn4. Residues 45–66 (AVTNYIFLLLCLCGLVGNGLVL) form a helical membrane-spanning segment. Topologically, residues 67–82 (WFFGFSIKRTPFSIYF) are cytoplasmic. A helical transmembrane segment spans residues 83–104 (LHLASADGMYLFSKAVIALLNM). The Extracellular portion of the chain corresponds to 105 to 123 (GTFLGSFPDYIRRVSRIVG). Residues 124-144 (LCTFFTGVSLLPAISIERCVS) traverse the membrane as a helical segment. Topologically, residues 145–160 (VIFPTWYWRRRPKRLS) are cytoplasmic. A helical transmembrane segment spans residues 161-181 (AGVCALLWMLSFLVTSIHNYF). The Extracellular portion of the chain corresponds to 182 to 198 (CMFLGHEAPGTVCRNMD). Residues 199–220 (IALGILLFFLFCPLMVLPCLAL) form a helical membrane-spanning segment. Over 221–241 (ILHVECRARRRQRSAKLNHVV) the chain is Cytoplasmic. Residues 242–263 (LAIVSVFLVSSIYLGIDWFLFW) form a helical membrane-spanning segment. Topologically, residues 264-273 (VFQIPAPFPE) are extracellular. A helical transmembrane segment spans residues 274-294 (YVTDLCICINSSAKPIVYFLA). Residues 295–343 (GRDKSQRLWEPLRVVFQRALRDGAEPGDAASSTPNTVTMEMQCPSGNAS) are Cytoplasmic-facing. Residues 318–343 (AEPGDAASSTPNTVTMEMQCPSGNAS) form a disordered region. Positions 324-343 (ASSTPNTVTMEMQCPSGNAS) are enriched in polar residues.

This sequence belongs to the G-protein coupled receptor 1 family. Mas subfamily.

Its subcellular location is the cell membrane. In terms of biological role, orphan receptor. May bind to a neuropeptide and may regulate nociceptor function and/or development, including the sensation or modulation of pain. In Mus musculus (Mouse), this protein is Mas-related G-protein coupled receptor member F (Mrgprf).